A 194-amino-acid polypeptide reads, in one-letter code: Fe/S biogenesis protein NfuA (194 aa).

Residues Cys152 and Cys155 each contribute to the [4Fe-4S] cluster site.

It belongs to the NfuA family. As to quaternary structure, homodimer. Requires [4Fe-4S] cluster as cofactor.

In terms of biological role, involved in iron-sulfur cluster biogenesis. Binds a 4Fe-4S cluster, can transfer this cluster to apoproteins, and thereby intervenes in the maturation of Fe/S proteins. Could also act as a scaffold/chaperone for damaged Fe/S proteins. In Pseudomonas aeruginosa (strain LESB58), this protein is Fe/S biogenesis protein NfuA.